Reading from the N-terminus, the 307-residue chain is N-acetylmuramic acid 6-phosphate etherase (307 aa).

One can recognise an SIS domain in the interval 59–222; sequence TADRLRQGGR…STGVMVKLGK (164 aa). The active-site Proton donor is E87. E118 is an active-site residue.

It belongs to the GCKR-like family. MurNAc-6-P etherase subfamily. As to quaternary structure, homodimer.

The enzyme catalyses N-acetyl-D-muramate 6-phosphate + H2O = N-acetyl-D-glucosamine 6-phosphate + (R)-lactate. The protein operates within amino-sugar metabolism; N-acetylmuramate degradation. Functionally, specifically catalyzes the cleavage of the D-lactyl ether substituent of MurNAc 6-phosphate, producing GlcNAc 6-phosphate and D-lactate. The protein is N-acetylmuramic acid 6-phosphate etherase of Trichormus variabilis (strain ATCC 29413 / PCC 7937) (Anabaena variabilis).